Here is a 484-residue protein sequence, read N- to C-terminus: Hexokinase-2 (484 aa).

The Hexokinase domain occupies 21–467 (PQLLEALKPI…SGVGAAVIAA (447 aa)). A hexokinase small subdomain region spans residues 75-208 (TGKETGSYLA…GVPIDVVALI (134 aa)). The interval 209–456 (NDTTGTLVAS…DPIIIVPAED (248 aa)) is hexokinase large subdomain.

Belongs to the hexokinase family. Monomer.

It localises to the cytoplasm. It carries out the reaction a D-hexose + ATP = a D-hexose 6-phosphate + ADP + H(+). It catalyses the reaction D-fructose + ATP = D-fructose 6-phosphate + ADP + H(+). The catalysed reaction is D-glucose + ATP = D-glucose 6-phosphate + ADP + H(+). Its pathway is carbohydrate metabolism; hexose metabolism. The protein operates within carbohydrate degradation; glycolysis; D-glyceraldehyde 3-phosphate and glycerone phosphate from D-glucose: step 1/4. Its function is as follows. Catalyzes the phosphorylation of hexose, such as D-glucose and D-fructose, to hexose 6-phosphate (D-glucose 6-phosphate and D-fructose 6-phosphate, respectively). Mediates the initial step of glycolysis by catalyzing phosphorylation of D-glucose to D-glucose 6-phosphate. The polypeptide is Hexokinase-2 (HXK2) (Candida albicans (strain SC5314 / ATCC MYA-2876) (Yeast)).